Here is a 403-residue protein sequence, read N- to C-terminus: Formin-like protein 21b (403 aa).

An FH2 domain is found at 1-380; sequence MELLFTATLL…KAAKEAEMEK (380 aa). The segment at 373-403 is disordered; it reads AKEAEMEKTKKRVSLTNKKASGVGEEESCLI.

It belongs to the formin-like family. Class-II subfamily.

This is Formin-like protein 21b (FH21B) from Arabidopsis thaliana (Mouse-ear cress).